Here is a 985-residue protein sequence, read N- to C-terminus: Probable beta-galactosidase C (985 aa).

The signal sequence occupies residues 1–23 (MRILSLLFLLLLGFLAGNRVVSA). Residues Y82, N127, A128, E129, and N187 each contribute to the substrate site. The Proton donor role is filled by E188. Position 251 (Y251) interacts with substrate. Cysteines 257 and 304 form a disulfide. N-linked (GlcNAc...) asparagine glycosylation occurs at N276. E287 acts as the Nucleophile in catalysis. A substrate-binding site is contributed by Y353. Residues N391, N434, N517, N602, N677, N715, N720, and N759 are each glycosylated (N-linked (GlcNAc...) asparagine).

It belongs to the glycosyl hydrolase 35 family.

The protein localises to the secreted. The enzyme catalyses Hydrolysis of terminal non-reducing beta-D-galactose residues in beta-D-galactosides.. In terms of biological role, cleaves beta-linked terminal galactosyl residues from gangliosides, glycoproteins, and glycosaminoglycans. This is Probable beta-galactosidase C (lacC) from Aspergillus clavatus (strain ATCC 1007 / CBS 513.65 / DSM 816 / NCTC 3887 / NRRL 1 / QM 1276 / 107).